Consider the following 135-residue polypeptide: ATP synthase epsilon chain (135 aa).

It belongs to the ATPase epsilon chain family. F-type ATPases have 2 components, CF(1) - the catalytic core - and CF(0) - the membrane proton channel. CF(1) has five subunits: alpha(3), beta(3), gamma(1), delta(1), epsilon(1). CF(0) has three main subunits: a, b and c.

It localises to the cellular thylakoid membrane. In terms of biological role, produces ATP from ADP in the presence of a proton gradient across the membrane. The chain is ATP synthase epsilon chain from Prochlorococcus marinus (strain NATL1A).